Reading from the N-terminus, the 357-residue chain is Nicotinate-nucleotide--dimethylbenzimidazole phosphoribosyltransferase (357 aa).

Glu323 (proton acceptor) is an active-site residue.

Belongs to the CobT family.

It carries out the reaction 5,6-dimethylbenzimidazole + nicotinate beta-D-ribonucleotide = alpha-ribazole 5'-phosphate + nicotinate + H(+). Its pathway is nucleoside biosynthesis; alpha-ribazole biosynthesis; alpha-ribazole from 5,6-dimethylbenzimidazole: step 1/2. Catalyzes the synthesis of alpha-ribazole-5'-phosphate from nicotinate mononucleotide (NAMN) and 5,6-dimethylbenzimidazole (DMB). This is Nicotinate-nucleotide--dimethylbenzimidazole phosphoribosyltransferase from Nitratidesulfovibrio vulgaris (strain DP4) (Desulfovibrio vulgaris).